The sequence spans 138 residues: Thyrotropin subunit beta (138 aa).

The signal sequence occupies residues 1–20 (MNAVVLFSVLFALACGQVSS). 6 disulfide bridges follow: Cys22/Cys72, Cys36/Cys87, Cys39/Cys125, Cys47/Cys103, Cys51/Cys105, and Cys108/Cys115. N-linked (GlcNAc...) asparagine glycosylation occurs at Asn43. The propeptide occupies 133 to 138 (LGGFSG).

The protein belongs to the glycoprotein hormones subunit beta family. Heterodimer of a common alpha chain and a unique beta chain which confers biological specificity to thyrotropin, lutropin, follitropin and gonadotropin.

The protein resides in the secreted. Its function is as follows. Indispensable for the control of thyroid structure and metabolism. The chain is Thyrotropin subunit beta (Tshb) from Rattus norvegicus (Rat).